The chain runs to 842 residues: Protein P (842 aa).

Residues M1–Q177 are terminal protein domain (TP). The tract at residues D178–L345 is spacer. The disordered stretch occupies residues F184–R238. Residues R197 to P208 show a composition bias toward low complexity. Polar residues predominate over residues S212–K228. Residues Q346–Q689 form a polymerase/reverse transcriptase domain (RT) region. Residues E356–I599 form the Reverse transcriptase domain. Mg(2+) contacts are provided by D428, D550, and D551.

The protein belongs to the hepadnaviridae P protein family.

The catalysed reaction is DNA(n) + a 2'-deoxyribonucleoside 5'-triphosphate = DNA(n+1) + diphosphate. The enzyme catalyses Endonucleolytic cleavage to 5'-phosphomonoester.. Its activity is regulated as follows. Activated by host HSP70 and HSP40 in vitro to be able to bind the epsilon loop of the pgRNA. Because deletion of the RNase H region renders the protein partly chaperone-independent, the chaperones may be needed indirectly to relieve occlusion of the RNA-binding site by this domain. Inhibited by several reverse-transcriptase inhibitors: Lamivudine, Adefovir and Entecavir. In terms of biological role, multifunctional enzyme that converts the viral RNA genome into dsDNA in viral cytoplasmic capsids. This enzyme displays a DNA polymerase activity that can copy either DNA or RNA templates, and a ribonuclease H (RNase H) activity that cleaves the RNA strand of RNA-DNA heteroduplexes in a partially processive 3'- to 5'-endonucleasic mode. Neo-synthesized pregenomic RNA (pgRNA) are encapsidated together with the P protein, and reverse-transcribed inside the nucleocapsid. Initiation of reverse-transcription occurs first by binding the epsilon loop on the pgRNA genome, and is initiated by protein priming, thereby the 5'-end of (-)DNA is covalently linked to P protein. Partial (+)DNA is synthesized from the (-)DNA template and generates the relaxed circular DNA (RC-DNA) genome. After budding and infection, the RC-DNA migrates in the nucleus, and is converted into a plasmid-like covalently closed circular DNA (cccDNA). The activity of P protein does not seem to be necessary for cccDNA generation, and is presumably released from (+)DNA by host nuclear DNA repair machinery. This Hepatitis B virus genotype G (isolate IG29227/2000) (HBV-G) protein is Protein P.